Here is a 321-residue protein sequence, read N- to C-terminus: Biotin synthase (321 aa).

A Radical SAM core domain is found at 37–264 (RDMELCTLSS…TSVIRLSAGR (228 aa)). [4Fe-4S] cluster is bound by residues Cys52, Cys56, and Cys59. Residues Cys96, Cys127, Cys187, and Arg259 each coordinate [2Fe-2S] cluster.

Belongs to the radical SAM superfamily. Biotin synthase family. As to quaternary structure, homodimer. The cofactor is [4Fe-4S] cluster. [2Fe-2S] cluster is required as a cofactor.

It catalyses the reaction (4R,5S)-dethiobiotin + (sulfur carrier)-SH + 2 reduced [2Fe-2S]-[ferredoxin] + 2 S-adenosyl-L-methionine = (sulfur carrier)-H + biotin + 2 5'-deoxyadenosine + 2 L-methionine + 2 oxidized [2Fe-2S]-[ferredoxin]. It participates in cofactor biosynthesis; biotin biosynthesis; biotin from 7,8-diaminononanoate: step 2/2. Its function is as follows. Catalyzes the conversion of dethiobiotin (DTB) to biotin by the insertion of a sulfur atom into dethiobiotin via a radical-based mechanism. This Coxiella burnetii (strain CbuK_Q154) (Coxiella burnetii (strain Q154)) protein is Biotin synthase.